Reading from the N-terminus, the 277-residue chain is Diaminopimelate epimerase (277 aa).

Substrate-binding residues include Asn-17, Gln-50, and Asn-68. The Proton donor role is filled by Cys-77. Substrate is bound by residues 78–79, Asn-162, Asn-195, and 213–214; these read GN and ER. Cys-222 serves as the catalytic Proton acceptor. Residue 223–224 participates in substrate binding; it reads GT.

The protein belongs to the diaminopimelate epimerase family. Homodimer.

It localises to the cytoplasm. It carries out the reaction (2S,6S)-2,6-diaminopimelate = meso-2,6-diaminopimelate. Its pathway is amino-acid biosynthesis; L-lysine biosynthesis via DAP pathway; DL-2,6-diaminopimelate from LL-2,6-diaminopimelate: step 1/1. Catalyzes the stereoinversion of LL-2,6-diaminopimelate (L,L-DAP) to meso-diaminopimelate (meso-DAP), a precursor of L-lysine and an essential component of the bacterial peptidoglycan. This Phenylobacterium zucineum (strain HLK1) protein is Diaminopimelate epimerase.